The primary structure comprises 763 residues: Phosphoglycerol transferase I (763 aa).

4 helical membrane-spanning segments follow: residues 1–21 (MSEL…AWKA), 26–46 (WWFA…ITLY), 77–97 (ILPG…LGWI), and 108–128 (VGYS…SPAF).

The protein belongs to the OpgB family.

Its subcellular location is the cell inner membrane. It carries out the reaction a phosphatidylglycerol + a membrane-derived-oligosaccharide D-glucose = a 1,2-diacyl-sn-glycerol + a membrane-derived-oligosaccharide 6-(glycerophospho)-D-glucose.. It functions in the pathway glycan metabolism; osmoregulated periplasmic glucan (OPG) biosynthesis. Transfers a phosphoglycerol residue from phosphatidylglycerol to the membrane-bound nascent glucan backbones. In Salmonella agona (strain SL483), this protein is Phosphoglycerol transferase I.